The chain runs to 375 residues: Tyrosine--tRNA ligase (375 aa).

The L-tyrosine site is built by Tyr37, Tyr168, Gln172, Asp175, and Gln190. Positions 251 to 255 (KMSKS) match the 'KMSKS' region motif. Lys254 lines the ATP pocket.

It belongs to the class-I aminoacyl-tRNA synthetase family. TyrS type 4 subfamily. Homodimer.

It localises to the cytoplasm. It catalyses the reaction tRNA(Tyr) + L-tyrosine + ATP = L-tyrosyl-tRNA(Tyr) + AMP + diphosphate + H(+). Its function is as follows. Catalyzes the attachment of tyrosine to tRNA(Tyr) in a two-step reaction: tyrosine is first activated by ATP to form Tyr-AMP and then transferred to the acceptor end of tRNA(Tyr). This chain is Tyrosine--tRNA ligase, found in Thermococcus gammatolerans (strain DSM 15229 / JCM 11827 / EJ3).